Reading from the N-terminus, the 132-residue chain is Small ribosomal subunit protein uS9 (132 aa).

It belongs to the universal ribosomal protein uS9 family.

The sequence is that of Small ribosomal subunit protein uS9 (rps9) from Halobacterium salinarum (strain ATCC 700922 / JCM 11081 / NRC-1) (Halobacterium halobium).